We begin with the raw amino-acid sequence, 352 residues long: Fe(3+) ions import ATP-binding protein FbpC (352 aa).

The ABC transporter domain occupies 5–239; the sequence is LHIGHLSKSF…PADLDAALFI (235 aa). 37 to 44 serves as a coordination point for ATP; the sequence is GASGCGKT.

This sequence belongs to the ABC transporter superfamily. Fe(3+) ion importer (TC 3.A.1.10) family. The complex is composed of two ATP-binding proteins (FbpC), two transmembrane proteins (FbpB) and a solute-binding protein (FbpA).

The protein resides in the cell inner membrane. It carries out the reaction Fe(3+)(out) + ATP + H2O = Fe(3+)(in) + ADP + phosphate + H(+). In terms of biological role, part of the ABC transporter complex FbpABC involved in Fe(3+) ions import. Responsible for energy coupling to the transport system. The polypeptide is Fe(3+) ions import ATP-binding protein FbpC (Neisseria gonorrhoeae (strain ATCC 700825 / FA 1090)).